We begin with the raw amino-acid sequence, 379 residues long: ATPase ASNA1 homolog (379 aa).

Residues 1–20 (MSEDESNSVSCSLSLESDGY) are disordered. A compositionally biased stretch (low complexity) spans 7-18 (NSVSCSLSLESD). An ATP-binding site is contributed by 46 to 53 (KGGVGKTT). Asp75 is a catalytic residue. Residues Glu246 and Asn273 each coordinate ATP.

The protein belongs to the arsA ATPase family. As to quaternary structure, homodimer.

It localises to the cytoplasm. The protein resides in the endoplasmic reticulum. Its function is as follows. ATPase required for the post-translational delivery of tail-anchored (TA) proteins to the endoplasmic reticulum. Recognizes and selectively binds the transmembrane domain of TA proteins in the cytosol. This complex then targets to the endoplasmic reticulum by membrane-bound receptors, where the tail-anchored protein is released for insertion. This process is regulated by ATP binding and hydrolysis. ATP binding drives the homodimer towards the closed dimer state, facilitating recognition of newly synthesized TA membrane proteins. ATP hydrolysis is required for insertion. Subsequently, the homodimer reverts towards the open dimer state, lowering its affinity for the membrane-bound receptor, and returning it to the cytosol to initiate a new round of targeting. This Plasmodium falciparum (isolate 3D7) protein is ATPase ASNA1 homolog.